A 93-amino-acid polypeptide reads, in one-letter code: MEDFDDLVNRVTPDRPRGWNHLGCDIKKLSQVKSELEQGKALLEEEKKELIEKNSNLNLQISNMNHLKTFKDAIDLVYSNFSKIDIKDEPCLN.

Positions 25 to 68 (DIKKLSQVKSELEQGKALLEEEKKELIEKNSNLNLQISNMNHLK) form a coiled coil.

This is an uncharacterized protein from Dictyostelium discoideum (Social amoeba).